We begin with the raw amino-acid sequence, 135 residues long: Large ribosomal subunit protein uL16 (135 aa).

It belongs to the universal ribosomal protein uL16 family. In terms of assembly, part of the 50S ribosomal subunit.

Binds 23S rRNA and is also seen to make contacts with the A and possibly P site tRNAs. This Desulfatibacillum aliphaticivorans protein is Large ribosomal subunit protein uL16.